The following is a 327-amino-acid chain: tRNA-modifying protein YgfZ (327 aa).

Folate is bound by residues tryptophan 27 and tryptophan 189.

Belongs to the tRNA-modifying YgfZ family.

It is found in the cytoplasm. Folate-binding protein involved in regulating the level of ATP-DnaA and in the modification of some tRNAs. It is probably a key factor in regulatory networks that act via tRNA modification, such as initiation of chromosomal replication. The chain is tRNA-modifying protein YgfZ from Klebsiella pneumoniae (strain 342).